Reading from the N-terminus, the 499-residue chain is Lysine--tRNA ligase (499 aa).

Glu-409 and Glu-416 together coordinate Mg(2+).

This sequence belongs to the class-II aminoacyl-tRNA synthetase family. In terms of assembly, homodimer. Requires Mg(2+) as cofactor.

Its subcellular location is the cytoplasm. It carries out the reaction tRNA(Lys) + L-lysine + ATP = L-lysyl-tRNA(Lys) + AMP + diphosphate. This is Lysine--tRNA ligase from Pseudomonas fluorescens (strain Pf0-1).